A 321-amino-acid polypeptide reads, in one-letter code: Methionyl-tRNA formyltransferase (321 aa).

(6S)-5,6,7,8-tetrahydrofolate is bound at residue 112 to 115; sequence GLLP.

The protein belongs to the Fmt family.

It catalyses the reaction L-methionyl-tRNA(fMet) + (6R)-10-formyltetrahydrofolate = N-formyl-L-methionyl-tRNA(fMet) + (6S)-5,6,7,8-tetrahydrofolate + H(+). In terms of biological role, attaches a formyl group to the free amino group of methionyl-tRNA(fMet). The formyl group appears to play a dual role in the initiator identity of N-formylmethionyl-tRNA by promoting its recognition by IF2 and preventing the misappropriation of this tRNA by the elongation apparatus. The sequence is that of Methionyl-tRNA formyltransferase from Chlamydia caviae (strain ATCC VR-813 / DSM 19441 / 03DC25 / GPIC) (Chlamydophila caviae).